The following is a 244-amino-acid chain: Globin-like protein 9 (244 aa).

The segment at 1-38 (MRRMAKYDRSYSMQDAHGPNGLARRGTQRGCSRSKSTR) is disordered. The region spanning 47–200 (SLTFSQKQAL…LIDELRGGFE (154 aa)) is the Globin domain. Heme is bound by residues His111 and His143.

This sequence belongs to the globin family.

This chain is Globin-like protein 9, found in Caenorhabditis briggsae.